The chain runs to 61 residues: MSEKACRHCHYITSEDRCPVCGSRDLSEEWFDLVIIVDVENSEIAKKIGAKVPGKYAIRVR.

The Zn(2+) site is built by cysteine 6, cysteine 9, cysteine 18, and cysteine 21.

This sequence belongs to the archaeal Spt4 family. Heterodimer composed of Spt4 and Spt5.

Its function is as follows. Stimulates transcription elongation. The protein is Transcription elongation factor Spt4 of Pyrococcus furiosus (strain ATCC 43587 / DSM 3638 / JCM 8422 / Vc1).